Here is a 403-residue protein sequence, read N- to C-terminus: Argininosuccinate synthase (403 aa).

Residues 13–21 (AYSGGLDTS) and alanine 40 each bind ATP. The L-citrulline site is built by tyrosine 91 and serine 96. ATP is bound at residue glycine 121. Threonine 123, asparagine 127, and aspartate 128 together coordinate L-aspartate. Asparagine 127 is a binding site for L-citrulline. Residues arginine 131, serine 180, serine 189, glutamate 265, and tyrosine 277 each contribute to the L-citrulline site.

This sequence belongs to the argininosuccinate synthase family. Type 1 subfamily. Homotetramer.

The protein resides in the cytoplasm. It carries out the reaction L-citrulline + L-aspartate + ATP = 2-(N(omega)-L-arginino)succinate + AMP + diphosphate + H(+). It functions in the pathway amino-acid biosynthesis; L-arginine biosynthesis; L-arginine from L-ornithine and carbamoyl phosphate: step 2/3. The protein is Argininosuccinate synthase of Leptospira interrogans serogroup Icterohaemorrhagiae serovar copenhageni (strain Fiocruz L1-130).